The sequence spans 442 residues: Ribosome biogenesis protein NOP53 (442 aa).

The disordered stretch occupies residues 242 to 264; the sequence is KPSSNTNLKKIEDKTPRQAQKSV.

The protein belongs to the NOP53 family.

The protein resides in the nucleus. It is found in the nucleolus. The protein localises to the nucleoplasm. Its function is as follows. May play a role in ribosome biogenesis. The sequence is that of Ribosome biogenesis protein NOP53 from Arabidopsis thaliana (Mouse-ear cress).